The following is a 104-amino-acid chain: MAAIQGIEGVISQLQATAMAARGQDTHSQSTVSFAGQLHAALDRISDRQTAARVQAEKFTLGEPGIALNDVMADMQKASVSMQMGIQVRNKLVAAYQEVMSMQV.

Belongs to the FliE family.

The protein resides in the bacterial flagellum basal body. The protein is Flagellar hook-basal body complex protein FliE of Salmonella agona (strain SL483).